The primary structure comprises 378 residues: Apolipoprotein A-IV (378 aa).

The first 20 residues, 1 to 20 (MFLKAVVLTLSLVAITGARA), serve as a signal peptide directing secretion. A run of 13 repeats spans residues 33–54 (DYFS…QSEL), 60–81 (SVTK…RNSW), 82–98 (EHSR…RQVG), 110–130 (PNCD…QAVG), 131–152 (PYAE…NQLT), 153–174 (SHAQ…SSLT), 175–196 (PFAD…GHLT), 197–218 (PYTD…RSLA), 219–240 (PYAQ…FQMK), 241–262 (KNAE…QRLA), 263–280 (PVAE…AGLH), 281–302 (KSLA…RNVG), and 303–324 (PYGE…QKLG). A 13 X 22 AA approximate tandem repeats region spans residues 33–324 (DYFSQLSNNA…QVEELRQKLG (292 aa)). The tract at residues 354–378 (EKESQDTPVALPKQEQEQSAVPLES) is disordered.

The protein belongs to the apolipoprotein A1/A4/E family. As to quaternary structure, homodimer.

It is found in the secreted. Its function is as follows. May have a role in chylomicrons and VLDL secretion and catabolism. Required for efficient activation of lipoprotein lipase by ApoC-II; potent activator of LCAT. Apoa-IV is a major component of HDL and chylomicrons. In Canis lupus familiaris (Dog), this protein is Apolipoprotein A-IV.